The chain runs to 206 residues: Uridine kinase (206 aa).

9 to 16 (GGSGSGKT) provides a ligand contact to ATP.

The protein belongs to the uridine kinase family.

The protein localises to the cytoplasm. The enzyme catalyses uridine + ATP = UMP + ADP + H(+). It carries out the reaction cytidine + ATP = CMP + ADP + H(+). Its pathway is pyrimidine metabolism; CTP biosynthesis via salvage pathway; CTP from cytidine: step 1/3. The protein operates within pyrimidine metabolism; UMP biosynthesis via salvage pathway; UMP from uridine: step 1/1. In Borrelia turicatae (strain 91E135), this protein is Uridine kinase.